The sequence spans 642 residues: Threonine--tRNA ligase (642 aa).

The TGS domain maps to 1–61 (MPVITLPDGS…ENDAQLSIIT (61 aa)). A catalytic region spans residues 243-534 (DHRKIGKQLD…LTEEFAGFFP (292 aa)). The residue at position 286 (Lys-286) is an N6-acetyllysine. Zn(2+) is bound by residues Cys-334, His-385, and His-511.

This sequence belongs to the class-II aminoacyl-tRNA synthetase family. As to quaternary structure, homodimer. The cofactor is Zn(2+).

Its subcellular location is the cytoplasm. The catalysed reaction is tRNA(Thr) + L-threonine + ATP = L-threonyl-tRNA(Thr) + AMP + diphosphate + H(+). Catalyzes the attachment of threonine to tRNA(Thr) in a two-step reaction: L-threonine is first activated by ATP to form Thr-AMP and then transferred to the acceptor end of tRNA(Thr). Also edits incorrectly charged L-seryl-tRNA(Thr). This Shigella boydii serotype 18 (strain CDC 3083-94 / BS512) protein is Threonine--tRNA ligase.